Consider the following 336-residue polypeptide: Large ribosomal subunit protein uL1 (336 aa).

A large ribosomal subunit protein uL1 region spans residues 1 to 245 (MANQKKVTNK…VKKTAKGKVI (245 aa)). Residues 246–336 (ADDSAKGENK…DVKKAKTSKK (91 aa)) form a unknown region. The segment at 267–336 (AQKKKPSKHP…DVKKAKTSKK (70 aa)) is disordered. The segment covering 286-305 (KKKKVKKILKKAKPAKKAAV) has biased composition (basic residues). Over residues 306–315 (AKKPVVVNKK) the composition is skewed to low complexity.

The protein belongs to the universal ribosomal protein uL1 family. Part of the 50S ribosomal subunit.

In terms of biological role, binds directly to 23S rRNA. The L1 stalk is quite mobile in the ribosome, and is involved in E site tRNA release. Protein L1 is also a translational repressor protein, it controls the translation of the L11 operon by binding to its mRNA. This Malacoplasma penetrans (strain HF-2) (Mycoplasma penetrans) protein is Large ribosomal subunit protein uL1.